A 209-amino-acid chain; its full sequence is MNQATEIAKLLLNIKAVTLNLHEPYRYTSGILSPIYCDNRLIISYPEKRKMIIEAFLQLIEKNHLSFDIVAGTATAGIPHAAWIADRLDLPMIYVRAKAKTHGKQNQIEGRIRKGQRALIVEDLISTGKSALAAGLALREKGVTVTDCIAIFSYQLPQAQQNFSDANINCHALSHFDTLIEMAVDEGYIDEIEKQKALAWNKDPEHWQP.

Residues Arg-96, Lys-100, His-102, and 122 to 130 (EDLISTGKS) contribute to the 5-phospho-alpha-D-ribose 1-diphosphate site. Residue Ser-126 coordinates orotate.

Belongs to the purine/pyrimidine phosphoribosyltransferase family. PyrE subfamily. In terms of assembly, homodimer. Mg(2+) serves as cofactor.

The enzyme catalyses orotidine 5'-phosphate + diphosphate = orotate + 5-phospho-alpha-D-ribose 1-diphosphate. The protein operates within pyrimidine metabolism; UMP biosynthesis via de novo pathway; UMP from orotate: step 1/2. Functionally, catalyzes the transfer of a ribosyl phosphate group from 5-phosphoribose 1-diphosphate to orotate, leading to the formation of orotidine monophosphate (OMP). This Coxiella burnetii (strain RSA 493 / Nine Mile phase I) protein is Orotate phosphoribosyltransferase.